Consider the following 147-residue polypeptide: TRAF-interacting protein with FHA domain-containing protein B (147 aa).

Positions 36 to 108 constitute an FHA domain; the sequence is LLVGRGQDTH…LHSVNRISFS (73 aa).

Interacts with TIFA.

In terms of biological role, inhibits TIFA-mediated TRAF6 activation possibly by inducing a conformational change in TIFA. In Rattus norvegicus (Rat), this protein is TRAF-interacting protein with FHA domain-containing protein B.